Consider the following 76-residue polypeptide: Theta defensin subunit C (76 aa).

Positions M1–A22 are cleaved as a signal peptide. The propeptide occupies R23 to L64. A Cyclopeptide (Arg-Cys) (interchain with C-73 in subunit A); in form BTD-4 cross-link involves residue R65. A disulfide bridge connects residues C68 and C73. A Cyclopeptide (Cys-Arg) (interchain with R-65 in subunit A); in form BTD-4 cross-link involves residue C73. Residues R74–L76 constitute a propeptide that is removed on maturation.

Belongs to the alpha-defensin family. Theta subfamily. As to quaternary structure, BTD-4 is a cyclic heterodimer composed of subunits A and C; disulfide-linked. Forms a cyclic peptide with subunit A (BTD-4). An additional intersubunit disulfide bond is formed.

Its function is as follows. BTD-4 has antimicrobial activity against the Gram-negative bacterium E.coli ML35, the Gram-positive bacterium S.aureus 502a, and the fungus C.albicans 16820. In Papio anubis (Olive baboon), this protein is Theta defensin subunit C (BTDC).